Here is a 327-residue protein sequence, read N- to C-terminus: Porphobilinogen deaminase (327 aa).

C250 carries the S-(dipyrrolylmethanemethyl)cysteine modification.

The protein belongs to the HMBS family. In terms of assembly, monomer. Requires dipyrromethane as cofactor.

The catalysed reaction is 4 porphobilinogen + H2O = hydroxymethylbilane + 4 NH4(+). It participates in porphyrin-containing compound metabolism; protoporphyrin-IX biosynthesis; coproporphyrinogen-III from 5-aminolevulinate: step 2/4. Functionally, tetrapolymerization of the monopyrrole PBG into the hydroxymethylbilane pre-uroporphyrinogen in several discrete steps. The protein is Porphobilinogen deaminase of Paraburkholderia phymatum (strain DSM 17167 / CIP 108236 / LMG 21445 / STM815) (Burkholderia phymatum).